The following is a 490-amino-acid chain: Betaine aldehyde dehydrogenase (490 aa).

K(+) contacts are provided by T26 and D93. 150–152 contacts NAD(+); that stretch reads GAW. The active-site Charge relay system is K162. NAD(+) is bound at residue 176-179; it reads KPSE. V180 lines the K(+) pocket. 230-233 lines the NAD(+) pocket; sequence GVAT. A K(+)-binding site is contributed by L246. E252 serves as the catalytic Proton acceptor. Positions 254, 286, and 387 each coordinate NAD(+). Catalysis depends on C286, which acts as the Nucleophile. A Cysteine sulfenic acid (-SOH) modification is found at C286. K(+) is bound by residues K457 and G460. E464 functions as the Charge relay system in the catalytic mechanism.

It belongs to the aldehyde dehydrogenase family. As to quaternary structure, dimer of dimers. It depends on K(+) as a cofactor.

It catalyses the reaction betaine aldehyde + NAD(+) + H2O = glycine betaine + NADH + 2 H(+). It functions in the pathway amine and polyamine biosynthesis; betaine biosynthesis via choline pathway; betaine from betaine aldehyde: step 1/1. Involved in the biosynthesis of the osmoprotectant glycine betaine. Catalyzes the irreversible oxidation of betaine aldehyde to the corresponding acid. The sequence is that of Betaine aldehyde dehydrogenase from Stenotrophomonas maltophilia (strain R551-3).